The sequence spans 291 residues: Probable prolyl 4-hydroxylase 12 (291 aa).

Topologically, residues 1–156 are cytoplasmic; that stretch reads MACLSRIFLI…GEEPSSVLHE (156 aa). The Fe2OG dioxygenase domain maps to 125 to 239; that stretch reads NGGSIKVRSY…LLVATKLIYA (115 aa). Fe cation-binding residues include lysine 142 and aspartate 144. Residues 157 to 173 traverse the membrane as a helical; Signal-anchor for type II membrane protein segment; the sequence is SLLATVVLYLSNTTQGG. The Lumenal segment spans residues 174–291; the sequence is ELLFPNSEMK…GTCRKSCNAC (118 aa). An N-linked (GlcNAc...) asparagine glycan is attached at asparagine 211. Residue histidine 220 participates in Fe cation binding. Residues 251–291 form the ShKT domain; that stretch reads CSDEDENCGRWAKLGECKKNPVYMIGSPDYYGTCRKSCNAC. 3 disulfide bridges follow: cysteine 251/cysteine 291, cysteine 258/cysteine 284, and cysteine 267/cysteine 288.

It belongs to the P4HA family. Fe(2+) serves as cofactor. Requires L-ascorbate as cofactor.

The protein resides in the endoplasmic reticulum membrane. The catalysed reaction is L-prolyl-[collagen] + 2-oxoglutarate + O2 = trans-4-hydroxy-L-prolyl-[collagen] + succinate + CO2. In terms of biological role, catalyzes the post-translational formation of 4-hydroxyproline in -Xaa-Pro-Gly- sequences in proline-rich peptide sequences of plant glycoproteins and other proteins. Hydroxyprolines are important constituent of many plant cell wall glycoproteins such as extensins, hydroxyproline-rich glycoproteins, lectins and arabinogalactan proteins. This chain is Probable prolyl 4-hydroxylase 12, found in Arabidopsis thaliana (Mouse-ear cress).